We begin with the raw amino-acid sequence, 964 residues long: Siderophore exporter MmpL5 (964 aa).

12 consecutive transmembrane segments (helical) span residues 31 to 51 (FAVP…VTVP), 203 to 223 (SLQV…LLVY), 230 to 250 (AIML…VAFL), 255 to 275 (IIGL…AAAT), 302 to 322 (MFGG…GATF), 340 to 360 (AIGM…IIAV), 389 to 409 (WPGP…LTLP), 773 to 793 (TYDL…IMLI), 803 to 823 (VIVG…VLIW), 826 to 846 (ILGI…LLAV), 880 to 900 (VVTA…VSEL), and 923 to 943 (SFMT…PQVV).

Belongs to the resistance-nodulation-cell division (RND) (TC 2.A.6) family. MmpL subfamily. As to quaternary structure, interacts with MmpS5.

Its subcellular location is the cell inner membrane. Functionally, part of an export system, which is required for biosynthesis and secretion of siderophores. The polypeptide is Siderophore exporter MmpL5 (mmpL5) (Mycobacterium tuberculosis (strain CDC 1551 / Oshkosh)).